Reading from the N-terminus, the 199-residue chain is dITP/XTP pyrophosphatase (199 aa).

Residue 7–12 (TGNAGK) coordinates substrate. The active-site Proton acceptor is the Asp68. Mg(2+) is bound at residue Asp68. Substrate-binding positions include Ser69, 153 to 156 (FGYD), Lys176, and 181 to 182 (HR).

It belongs to the HAM1 NTPase family. In terms of assembly, homodimer. The cofactor is Mg(2+).

The enzyme catalyses XTP + H2O = XMP + diphosphate + H(+). The catalysed reaction is dITP + H2O = dIMP + diphosphate + H(+). It catalyses the reaction ITP + H2O = IMP + diphosphate + H(+). Its function is as follows. Pyrophosphatase that catalyzes the hydrolysis of nucleoside triphosphates to their monophosphate derivatives, with a high preference for the non-canonical purine nucleotides XTP (xanthosine triphosphate), dITP (deoxyinosine triphosphate) and ITP. Seems to function as a house-cleaning enzyme that removes non-canonical purine nucleotides from the nucleotide pool, thus preventing their incorporation into DNA/RNA and avoiding chromosomal lesions. In Halorhodospira halophila (strain DSM 244 / SL1) (Ectothiorhodospira halophila (strain DSM 244 / SL1)), this protein is dITP/XTP pyrophosphatase.